Here is a 1479-residue protein sequence, read N- to C-terminus: Type VII secretion system protein EssC (1479 aa).

Positions 1-189 are required for substrate secretion, protein missing this segment is unstable; that stretch reads MHKLIIKYNK…ASSLIRLTQE (189 aa). Over 1–229 the chain is Cytoplasmic; that stretch reads MHKLIIKYNK…RPPQPIQKNN (229 aa). A helical membrane pass occupies residues 230–252; that stretch reads TVIWRSIIPPLVMIALTVVIFLV. Over 253–256 the chain is Extracellular; sequence RPIG. The chain crosses the membrane as a helical span at residues 257–279; it reads IYILMMIGMSTVTIVFGITTYFS. Topologically, residues 280–1479 are cytoplasmic; the sequence is EKKKYNKDVE…QAYQKIRWFK (1200 aa). 2 FtsK domains span residues 652–846 and 997–1183; these read DDIL…QDSN and QGPM…SEVS. ATP-binding positions include 672–679 and 1014–1021; these read GTTGSGKS and GSPGYGRT. Residues 1249 to 1479 form a required for substrate secretion, truncated protein is stable region; the sequence is MMPDEIKYED…QAYQKIRWFK (231 aa).

This sequence belongs to the EssC family. As to quaternary structure, homooligomer. Interacts with EsaE.

The protein resides in the cell membrane. In terms of biological role, component of the type VII secretion system (Ess). Required for the secretion of substrates including EsxA and EsxB. However, unable to support secretion of the substrate protein EsxC. The polypeptide is Type VII secretion system protein EssC (Staphylococcus aureus (strain NCTC 8325 / PS 47)).